The chain runs to 331 residues: Ferrochelatase (331 aa).

The Fe cation site is built by H187 and E286.

Belongs to the ferrochelatase family.

The protein localises to the cytoplasm. It catalyses the reaction heme b + 2 H(+) = protoporphyrin IX + Fe(2+). Its pathway is porphyrin-containing compound metabolism; protoheme biosynthesis; protoheme from protoporphyrin-IX: step 1/1. Its function is as follows. Catalyzes the ferrous insertion into protoporphyrin IX. This is Ferrochelatase from Legionella pneumophila (strain Lens).